Reading from the N-terminus, the 80-residue chain is Waprin-Phi3 (80 aa).

Residues 1–22 form the signal peptide; the sequence is MKPWILLLLAGLLILSTQLTTA. Residues 31–78 enclose the WAP domain; it reads PKVKPGECPKVKIPPDYPCNQYCVWDFDCEGNKKCCPVGCAKECFPPG. 4 cysteine pairs are disulfide-bonded: Cys38-Cys66, Cys49-Cys70, Cys53-Cys65, and Cys59-Cys74.

This sequence belongs to the venom waprin family. Expressed by the venom gland.

It localises to the secreted. Damages membranes of susceptible bacteria. Has no hemolytic activity. Not toxic to mice. Does not inhibit the proteinases elastase and cathepsin G. The chain is Waprin-Phi3 from Philodryas olfersii (Green snake).